A 488-amino-acid polypeptide reads, in one-letter code: UL37 immediate early glycoprotein (488 aa).

The first 22 residues, 1–22, serve as a signal peptide directing secretion; it reads MSPVYVNLLGSVGLLAFWYFSY. Positions 83–107 are enriched in acidic residues; the sequence is GEESVTEDTEREDTEEEREDEEEEN. Residues 83-119 form a disordered region; that stretch reads GEESVTEDTEREDTEEEREDEEEENEARTPEVNPMDA. Asparagine 206, asparagine 210, asparagine 219, asparagine 223, asparagine 242, asparagine 275, asparagine 281, asparagine 294, asparagine 297, asparagine 306, asparagine 333, asparagine 337, asparagine 343, asparagine 384, and asparagine 391 each carry an N-linked (GlcNAc...) asparagine; by host glycan. Residues 439 to 459 form a helical membrane-spanning segment; that stretch reads ICTVAAGSIALLSLFCILLIG.

This sequence belongs to the immediate early glycoprotein family. As to quaternary structure, interacts with host BAX. Interacts with host RSAD2/viperin; this interaction results in RSAD2/viperin relocalization from the endoplasmic reticulum to the mitochondria, actin cytoskeleton disruption and enhancement of infection. Interacts with host PEX19; this interaction inhibits the peroxisomal-dependent antiviral signaling. Interacts with host CHCHD6; this interaction rewires mitochondria by engaging the conserved MICOS complex.

The protein resides in the host membrane. The protein localises to the host endoplasmic reticulum membrane. Its subcellular location is the host Golgi apparatus membrane. It localises to the host mitochondrion membrane. It is found in the host peroxisome. In terms of biological role, multifunctional transmembrane protein that plays several key roles in viral replication. Rapidely traffics from the host endoplasmic reticulum to the outer mitochondrial membrane where it acts to inhibit host immune response, block apoptotic signaling, regulate calcium flux, and induce mitochondrial fragmentation. Sequesters proapoptotic BAX at the outer mitochondrial membrane and prevents cytochrome c release and subsequent initiation of the proapoptotic cascade. Also provoques a calcium efflux from host endoplasmic reticulum and F-actin cytoskeleton disruption. Participates in the increase of host mitochondrial biogenesis, thus promoting viral replication by efficient use of newly made mitochondria. Additionally, a subset of vMIA localizes to peroxisomes, causing fragmentation and blocking peroxisomal MAVS signaling. Mechanistically, inhibits host MAVS oligomerization at peroxisomes in a mitochondrial fission factors (MFF)-dependent manner and in mitochondria independently of mitochondrial fission factors. Plays an essential role in the trafficking of host viperin/RSAD2 from the endoplasmic reticulum to the viral assembly compartment via the mitochondria during viral infection as failure of viperin to localize to the mitochondria results in insufficient lipogenesis and thus reduces viral replication. May play a role in escape from the host antiviral response. This chain is UL37 immediate early glycoprotein (UL37), found in Homo sapiens (Human).